Consider the following 327-residue polypeptide: Aquaporin-1 (327 aa).

The interval 1–34 is disordered; the sequence is MSSNDSNDTDKQHTRLDPTGVDDAYIPPEQPETK. At 1-48 the chain is on the cytoplasmic side; sequence MSSNDSNDTDKQHTRLDPTGVDDAYIPPEQPETKHHRFKISRDTLRNH. A helical transmembrane segment spans residues 49–69; it reads FIAAVGEFCGTFMFLWCAYVI. The Extracellular portion of the chain corresponds to 70-91; sequence CNVANHDVALVAAPDGSHPGQL. The chain crosses the membrane as a helical span at residues 92–112; the sequence is IMIAIGFGFSVMFSIWCFAGV. Topologically, residues 113–136 are cytoplasmic; that stretch reads SGGALNPAVSLSLCLARAVSPTRC. The short motif at 118–120 is the NPA 1 element; sequence NPA. The chain crosses the membrane as a helical span at residues 137-157; that stretch reads VVMWVSQIVAGMAAGGAASAM. The Extracellular segment spans residues 158 to 176; sequence TPGEVLFANSLGLGCSRTR. Residues 177–197 form a helical membrane-spanning segment; sequence GLFLEMFGTAILCLTVLMTAV. At 198 to 203 the chain is on the cytoplasmic side; that stretch reads EKRETN. A helical membrane pass occupies residues 204 to 224; it reads FMAALPIGISLFIAHVALTAY. Topologically, residues 225–248 are extracellular; that stretch reads TGTGVNPARSLGAAVAARYFPHYH. An NPA 2 motif is present at residues 230–232; sequence NPA. Residues 249–269 form a helical membrane-spanning segment; that stretch reads WIYWIGPLLGSILAWSVWQLL. Residues 270 to 327 lie on the Cytoplasmic side of the membrane; sequence QILDYTTYVTAEKAASTKEKAQKKVKPAVPLLWLKSNFPLLFFISRSLALNVIIFGKN.

It belongs to the MIP/aquaporin (TC 1.A.8) family.

It is found in the endoplasmic reticulum membrane. Its subcellular location is the cell membrane. In terms of biological role, water channel required to facilitate the transport of water across membranes. Involved in sporulation, freeze tolerance and osmotolerance. Is non-functional in most laboratory strains. This Saccharomyces cerevisiae (Baker's yeast) protein is Aquaporin-1 (AQY1).